We begin with the raw amino-acid sequence, 86 residues long: Small ribosomal subunit protein bS20 (86 aa).

Belongs to the bacterial ribosomal protein bS20 family.

In terms of biological role, binds directly to 16S ribosomal RNA. In Buchnera aphidicola subsp. Cinara cedri (strain Cc), this protein is Small ribosomal subunit protein bS20.